The primary structure comprises 1174 residues: MLEGCILAGSRQIESTTNNSVPGAPNRISFAKLREPLEVPGLLDVQTESFEWLIGAEDWFQRAVDRGDVDPKGGLQEVLEELSPIEDFSGSMSLSFSDPRFDEVKAPVDECKDKDMTYAAPLFVTAEFINNNTGEIKSQTVFMGDFPMMTEKGTFIINGTERVVVSQLVRSPGVYFDESIDKSTEKTLHSVKVIPGRGAWLEFDVDKRDTVGVRIDRKRRQPVTVLLKALGWTNEQIVERFGFSEIMMSTLEKDNTAGTDEALLDIYRKLRPGEPPTKESAQTLLENLFFKEKRYDLARVGRYKVNKKLGLNVGQPITSSTLTEEDVVATIEYLVRLHQGDQTMTAPGGSEVPVEVDDIDHFGNRRLRTVGELIQNQIRVGLSRMERVVRERMTTQDVEAITPQTLINIRPVVAAIKEFFGTSQLSQFMDQNNPLSGLTHKRRLSALGPGGLSRERAGLEVRDVHSSHYGRMCPIETPEGPNIGLIGSLSVYARVNPFGFIETPYRKVVDGVVSDQIDYLTADEEDRHVVAQANSPLDGDGRFEEERVLVRRKGGEVEFVSASEVDYMDVSPRQMVSVATAMIPFLEHDDANRALMGANMQRQAVPLVRSEAPLVGTGMELRAAIDAGDVVVTDKAGVVEEVSADYITVMADDGTRHTYRMRKFARSNHGTCANQRPIVDAGQRVETGQVLADGPCTENGEMALGKNLLVAIMPWEGHNYEDAIILSNRLVEEDVLTSIHIEEHEIDARDTKLGAEEITRDIPNVSDEVLADLDERGIIRIGAEVRDGDILVGKVTPKGETELTPEERLLRAIFGEKAREVRDTSLKVPHGESGKVIGIRVFSREDDDELPAGVNELVRVYVAQKRKISDGDKLAGRHGNKGVIGKILPVEDMPFLPDGTPVDIILNTHGVPRRMNIGQILETHLGWVAKAGWNIRLASDGADGSTEVPAWAAKLPEHMLSAPADSIVATPVFDGAQEGELQGLLGATLPNRDGETMVNSDGKAVLFDGRSGEPFPYPVTVGYMYILKLHHLVDDKIHARSTGPYSMITQQPLGGKAQFGGQRFGEMECWAMQAYGAAYTLQELLTIKSDDTVGRVKVYEAIVKGENIPEPGIPESFKVLLKELQSLCLNVEVLSSDGAAIEMRDGDDEDLERAAANLGINLSRNESASVEDLA.

The protein belongs to the RNA polymerase beta chain family. The RNAP catalytic core consists of 2 alpha, 1 beta, 1 beta' and 1 omega subunit. When a sigma factor is associated with the core the holoenzyme is formed, which can initiate transcription.

The catalysed reaction is RNA(n) + a ribonucleoside 5'-triphosphate = RNA(n+1) + diphosphate. Functionally, DNA-dependent RNA polymerase catalyzes the transcription of DNA into RNA using the four ribonucleoside triphosphates as substrates. This Mycolicibacterium gilvum (strain PYR-GCK) (Mycobacterium gilvum (strain PYR-GCK)) protein is DNA-directed RNA polymerase subunit beta.